The sequence spans 412 residues: Short-chain specific acyl-CoA dehydrogenase, mitochondrial (412 aa).

The transit peptide at 1 to 24 (MAAALLARASGPARRALCPRAWRQ) directs the protein to the mitochondrion. T27 bears the Phosphothreonine mark. K51 carries the post-translational modification N6-acetyllysine; alternate. At K51 the chain carries N6-succinyllysine; alternate. K72 is subject to N6-acetyllysine. K129 is modified (N6-acetyllysine; alternate). At K129 the chain carries N6-succinyllysine; alternate. FAD is bound by residues 152–161 (FALSEPGNGS) and 185–187 (WIT). S161 provides a ligand contact to substrate. K208 is subject to N6-acetyllysine. N6-acetyllysine; alternate is present on K262. K262 is modified (N6-succinyllysine; alternate). Residue 269 to 272 (DMGR) participates in substrate binding. Residue R297 participates in FAD binding. K306 carries the post-translational modification N6-acetyllysine; alternate. Position 306 is an N6-succinyllysine; alternate (K306). FAD-binding positions include Q308 and 365–369 (QILGG). The active-site Proton acceptor is E392. G393 serves as a coordination point for substrate. Residue 394-396 (TSE) participates in FAD binding.

Belongs to the acyl-CoA dehydrogenase family. In terms of assembly, homotetramer. FAD is required as a cofactor.

It is found in the mitochondrion matrix. The enzyme catalyses a short-chain 2,3-saturated fatty acyl-CoA + oxidized [electron-transfer flavoprotein] + H(+) = a short-chain (2E)-enoyl-CoA + reduced [electron-transfer flavoprotein]. It carries out the reaction butanoyl-CoA + oxidized [electron-transfer flavoprotein] + H(+) = (2E)-butenoyl-CoA + reduced [electron-transfer flavoprotein]. The catalysed reaction is pentanoyl-CoA + oxidized [electron-transfer flavoprotein] + H(+) = (2E)-pentenoyl-CoA + reduced [electron-transfer flavoprotein]. It catalyses the reaction hexanoyl-CoA + oxidized [electron-transfer flavoprotein] + H(+) = (2E)-hexenoyl-CoA + reduced [electron-transfer flavoprotein]. It participates in lipid metabolism; mitochondrial fatty acid beta-oxidation. Functionally, short-chain specific acyl-CoA dehydrogenase is one of the acyl-CoA dehydrogenases that catalyze the first step of mitochondrial fatty acid beta-oxidation, an aerobic process breaking down fatty acids into acetyl-CoA and allowing the production of energy from fats. The first step of fatty acid beta-oxidation consists in the removal of one hydrogen from C-2 and C-3 of the straight-chain fatty acyl-CoA thioester, resulting in the formation of trans-2-enoyl-CoA. Among the different mitochondrial acyl-CoA dehydrogenases, short-chain specific acyl-CoA dehydrogenase acts specifically on acyl-CoAs with saturated 4 to 6 carbons long primary chains. The polypeptide is Short-chain specific acyl-CoA dehydrogenase, mitochondrial (ACADS) (Homo sapiens (Human)).